The primary structure comprises 136 residues: Fluoride-specific ion channel FluC (136 aa).

The next 4 membrane-spanning stretches (helical) occupy residues 3–23, 46–66, 78–98, and 109–129; these read TLPPLYATLNVALGGAIGAVL, ATLAINALGSLLMGVLAGVLF, LLIGTGILGGFTTFSAFSLEV, and FAALYVVLSVSLAISALVFGL. Na(+) is bound by residues glycine 86 and threonine 89.

The protein belongs to the fluoride channel Fluc/FEX (TC 1.A.43) family.

Its subcellular location is the cell inner membrane. The catalysed reaction is fluoride(in) = fluoride(out). With respect to regulation, na(+) is not transported, but it plays an essential structural role and its presence is essential for fluoride channel function. Its function is as follows. Fluoride-specific ion channel. Important for reducing fluoride concentration in the cell, thus reducing its toxicity. The protein is Fluoride-specific ion channel FluC of Erythrobacter litoralis (strain HTCC2594).